Reading from the N-terminus, the 100-residue chain is Small ribosomal subunit protein uS14c (100 aa).

Belongs to the universal ribosomal protein uS14 family. In terms of assembly, part of the 30S ribosomal subunit.

It localises to the plastid. Its subcellular location is the chloroplast. Binds 16S rRNA, required for the assembly of 30S particles. This chain is Small ribosomal subunit protein uS14c, found in Staurastrum punctulatum (Green alga).